Consider the following 441-residue polypeptide: MSHEGEEELLDYSDSEEIALPSTTVESGSNGDAKAETTTVKEENTEQKGSYVGIHSTGFRDFLLKPELLRAIVDCGFEHPSEVQQVCIPQSILGTDVLCQAKAGVGKTAVFVLSTLQQLEPVPGECSVVVLCHTRELAYQIMNEYARFSKYLPDVKTAVFYGGSPIQKDIELIQNKETSPHVIVATPGRLHALVRDKHLRLGNVKTFVIDECDKVLDQIDMRRDVQEIFRVTPRQKQVMMFSATLSQEIRPICKKFMSSPLEILVDDEGKLTLHGLQQYYVDVEEKSKNRKLGDLLDNLEFNQVIIFVKSTSRANGLSQVLNANGFPCTAVHSGIPQEERIARYKEFKEFKKRICVSTDVFGRGIDIERINLAINYDLPAEADQYLHRVGRAGRFGTKGLAISFVSTPEDKEVLAKIQERFEVNIAPYPAEGVDPSTYMNS.

Acidic residues predominate over residues 1-17 (MSHEGEEELLDYSDSEE). A disordered region spans residues 1–47 (MSHEGEEELLDYSDSEEIALPSTTVESGSNGDAKAETTTVKEENTEQ). Over residues 21 to 30 (PSTTVESGSN) the composition is skewed to polar residues. Positions 33-46 (AKAETTTVKEENTE) are enriched in basic and acidic residues. The short motif at 57 to 85 (TGFRDFLLKPELLRAIVDCGFEHPSEVQQ) is the Q motif element. The 176-residue stretch at 88 to 263 (IPQSILGTDV…KKFMSSPLEI (176 aa)) folds into the Helicase ATP-binding domain. ATP is bound at residue 101 to 108 (AKAGVGKT). Residues 210–213 (DECD) carry the DECD box motif. Residues 275–436 (GLQQYYVDVE…PYPAEGVDPS (162 aa)) form the Helicase C-terminal domain.

This sequence belongs to the DEAD box helicase family. DECD subfamily.

It is found in the nucleus. The enzyme catalyses ATP + H2O = ADP + phosphate + H(+). Functionally, ATP-binding RNA helicase involved in transcription elongation and required for the export of mRNA out of the nucleus. SUB2 also plays a role in pre-mRNA splicing and spliceosome assembly. May be involved in rDNA and telomeric silencing, and maintenance of genome integrity. In Yarrowia lipolytica (strain CLIB 122 / E 150) (Yeast), this protein is ATP-dependent RNA helicase SUB2 (SUB2).